The chain runs to 379 residues: Queuine tRNA-ribosyltransferase (379 aa).

Aspartate 94 functions as the Proton acceptor in the catalytic mechanism. Substrate contacts are provided by residues 94–98 (DSGGF), aspartate 148, glutamine 191, and glycine 218. Positions 249-255 (GVGSPDA) are RNA binding. Aspartate 268 (nucleophile) is an active-site residue. Residues 273 to 277 (TRIAR) are RNA binding; important for wobble base 34 recognition. Zn(2+) contacts are provided by cysteine 306, cysteine 308, cysteine 311, and histidine 337.

The protein belongs to the queuine tRNA-ribosyltransferase family. Homodimer. Within each dimer, one monomer is responsible for RNA recognition and catalysis, while the other monomer binds to the replacement base PreQ1. Zn(2+) serves as cofactor.

It carries out the reaction 7-aminomethyl-7-carbaguanine + guanosine(34) in tRNA = 7-aminomethyl-7-carbaguanosine(34) in tRNA + guanine. It participates in tRNA modification; tRNA-queuosine biosynthesis. Functionally, catalyzes the base-exchange of a guanine (G) residue with the queuine precursor 7-aminomethyl-7-deazaguanine (PreQ1) at position 34 (anticodon wobble position) in tRNAs with GU(N) anticodons (tRNA-Asp, -Asn, -His and -Tyr). Catalysis occurs through a double-displacement mechanism. The nucleophile active site attacks the C1' of nucleotide 34 to detach the guanine base from the RNA, forming a covalent enzyme-RNA intermediate. The proton acceptor active site deprotonates the incoming PreQ1, allowing a nucleophilic attack on the C1' of the ribose to form the product. After dissociation, two additional enzymatic reactions on the tRNA convert PreQ1 to queuine (Q), resulting in the hypermodified nucleoside queuosine (7-(((4,5-cis-dihydroxy-2-cyclopenten-1-yl)amino)methyl)-7-deazaguanosine). The polypeptide is Queuine tRNA-ribosyltransferase (Staphylococcus aureus (strain Mu3 / ATCC 700698)).